The sequence spans 549 residues: uncharacterized protein (549 aa).

This is an uncharacterized protein from Methanocaldococcus jannaschii (strain ATCC 43067 / DSM 2661 / JAL-1 / JCM 10045 / NBRC 100440) (Methanococcus jannaschii).